Consider the following 673-residue polypeptide: DNA ligase (673 aa).

NAD(+) is bound by residues 38-42 (DSVYD), 87-88 (SL), and Glu119. Lys121 (N6-AMP-lysine intermediate) is an active-site residue. Arg142, Glu179, Lys296, and Lys320 together coordinate NAD(+). Zn(2+) is bound by residues Cys414, Cys417, Cys432, and Cys438. A BRCT domain is found at 595–673 (VVKSEIAGKT…EEAFLKLLKS (79 aa)).

It belongs to the NAD-dependent DNA ligase family. LigA subfamily. Mg(2+) serves as cofactor. Mn(2+) is required as a cofactor.

The catalysed reaction is NAD(+) + (deoxyribonucleotide)n-3'-hydroxyl + 5'-phospho-(deoxyribonucleotide)m = (deoxyribonucleotide)n+m + AMP + beta-nicotinamide D-nucleotide.. Its function is as follows. DNA ligase that catalyzes the formation of phosphodiester linkages between 5'-phosphoryl and 3'-hydroxyl groups in double-stranded DNA using NAD as a coenzyme and as the energy source for the reaction. It is essential for DNA replication and repair of damaged DNA. This Coxiella burnetii (strain CbuK_Q154) (Coxiella burnetii (strain Q154)) protein is DNA ligase.